The primary structure comprises 445 residues: Phosphoglucosamine mutase (445 aa).

S102 serves as the catalytic Phosphoserine intermediate. Mg(2+) is bound by residues S102, D241, D243, and D245. Residue S102 is modified to Phosphoserine.

Belongs to the phosphohexose mutase family. The cofactor is Mg(2+). In terms of processing, activated by phosphorylation.

It catalyses the reaction alpha-D-glucosamine 1-phosphate = D-glucosamine 6-phosphate. Functionally, catalyzes the conversion of glucosamine-6-phosphate to glucosamine-1-phosphate. In Shigella boydii serotype 4 (strain Sb227), this protein is Phosphoglucosamine mutase.